The sequence spans 843 residues: Elongation factor 2 (843 aa).

A tr-type G domain is found at 17-344 (HNIRNMSVIA…MMIFHLPSPH (328 aa)). GTP is bound by residues 26–33 (AHVDHGKS) and 158–161 (NKMD). The residue at position 700 (His700) is a Diphthamide. Ser837 carries the phosphoserine modification.

This sequence belongs to the TRAFAC class translation factor GTPase superfamily. Classic translation factor GTPase family. May interact with glutaredoxins (Grxs). Expressed in root, stem, leaves, flowers and siliques.

It is found in the cytoplasm. The enzyme catalyses GTP + H2O = GDP + phosphate + H(+). It functions in the pathway protein biosynthesis; polypeptide chain elongation. In terms of biological role, catalyzes the GTP-dependent ribosomal translocation step during translation elongation. During this step, the ribosome changes from the pre-translocational (PRE) to the post-translocational (POST) state as the newly formed A-site-bound peptidyl-tRNA and P-site-bound deacylated tRNA move to the P and E sites, respectively. Catalyzes the coordinated movement of the two tRNA molecules, the mRNA and conformational changes in the ribosome. Involved in cold responses leading to freezing tolerance via the induction of cold-responsive genes. This Arabidopsis thaliana (Mouse-ear cress) protein is Elongation factor 2.